A 387-amino-acid chain; its full sequence is MTSHPVFIDLSLDEQVQELRKYFKKLGAEISSEKSNKGVEDDLHKIIGVCEVCFKDGEPAQIDGILNSIVSIMITIPLDRGENIVLAYCEKMTKAPNQPLAKVCLQSLWRLFNNLDTASPLRYHVYYHLVQVAKQCDQVLEVFTGVDQLKSQFANCPPSSEQMQKLYRLLHDVTKDTNLELSSKVMIELLGTYTADNACVAREDAMKCIVTALADPNTFLLDPLLSLKPVRFLEGDLIHDLLSIFVSDKLPSYVQFYEDHKEFVNSQGLNHEQNMKKMRLLTFMQLAESYPEMTFDTLTKELQINEDEVEPFVIEVLKTKLVRARLDQANRKVHISSTMHRTFGAPQWEQLRDLLQAWKENLSSVREGLTNVSSAQLDLARSQKLIH.

The PCI domain occupies 181–340 (LSSKVMIELL…RKVHISSTMH (160 aa)).

The protein belongs to the eIF-3 subunit M family. In terms of assembly, component of the eukaryotic translation initiation factor 3 (eIF-3) complex. The eIF-3 complex interacts with pix.

Its subcellular location is the cytoplasm. It localises to the golgi apparatus. Its function is as follows. Component of the eukaryotic translation initiation factor 3 (eIF-3) complex, which is involved in protein synthesis of a specialized repertoire of mRNAs and, together with other initiation factors, stimulates binding of mRNA and methionyl-tRNAi to the 40S ribosome. The eIF-3 complex specifically targets and initiates translation of a subset of mRNAs involved in cell proliferation. The polypeptide is Eukaryotic translation initiation factor 3 subunit M (Drosophila mojavensis (Fruit fly)).